A 407-amino-acid polypeptide reads, in one-letter code: Putative metabolite transport protein HI_1104 (407 aa).

The Cytoplasmic segment spans residues 1–16; sequence MTNKVNSYGWKALIGS. A helical transmembrane segment spans residues 17–37; the sequence is AVGYGMDGFDLLILGFMLSAI. Over 38 to 48 the chain is Periplasmic; the sequence is SADLNLTPAQG. A helical transmembrane segment spans residues 49–69; it reads GSLVTWTLIGAVFGGILFGAL. Over 70–77 the chain is Cytoplasmic; that stretch reads SDKYGRVR. The helical transmembrane segment at 78–98 threads the bilayer; the sequence is VLTWTILLFAVFTGLCAIAQG. Over 99–107 the chain is Periplasmic; it reads YWDLLIYRT. Residues 108-128 traverse the membrane as a helical segment; that stretch reads IAGIGLGGEFGIGMALAAEAW. At 129 to 138 the chain is on the cytoplasmic side; sequence PARHRAKAAS. Residues 139–159 traverse the membrane as a helical segment; sequence YVALGWQVGVLGAALLTPLLL. A topological domain (periplasmic) is located at residue proline 160. A helical membrane pass occupies residues 161–181; that stretch reads HIGWRGMFLVGIFPAFVAWFL. Topologically, residues 182 to 224 are cytoplasmic; that stretch reads RSHLHEPEIFTQKQTALSTQSSFTDKLRSFQLLIKDKATSKIS. The chain crosses the membrane as a helical span at residues 225 to 245; sequence LGIVVLTSVQNFGYYGIMIWL. Topologically, residues 246–261 are periplasmic; that stretch reads PNFLSKQLGFSLTKSG. Residues 262–282 traverse the membrane as a helical segment; the sequence is LWTAVTVCGMMAGIWIFGQLA. Residues 283 to 288 lie on the Cytoplasmic side of the membrane; it reads DRIGRK. Residues 289–309 traverse the membrane as a helical segment; sequence PSFLLFQLGAVISIVVYSQLT. The Periplasmic segment spans residues 310-312; sequence DPD. The helical transmembrane segment at 313–333 threads the bilayer; that stretch reads IMLLAGAFLGMFVNGMLGGYG. The Cytoplasmic segment spans residues 334–357; the sequence is ALMAEAYPTEARATAQNVLFNIGR. Helical transmembrane passes span 358–378 and 379–399; these read AVGG…SFQT and AIAL…FLIP. Residues 400–407 are Cytoplasmic-facing; the sequence is ELKGKALD.

Belongs to the major facilitator superfamily. Aromatic acid:H(+) symporter (AAHS) (TC 2.A.1.15) family.

It localises to the cell inner membrane. This chain is Putative metabolite transport protein HI_1104, found in Haemophilus influenzae (strain ATCC 51907 / DSM 11121 / KW20 / Rd).